Consider the following 952-residue polypeptide: G patch domain-containing protein 1 homolog (952 aa).

6 disordered regions span residues 104–127 (QGIR…QRRR), 165–233 (GWKP…DDYE), 320–345 (DKKP…EDNS), 370–432 (RSRF…KDHS), 660–711 (PEKV…RNKP), and 822–952 (VAPE…KSKH). A compositionally biased stretch (basic and acidic residues) spans 107–123 (RTRDEFANEDEQKQRSD). Residues 153–199 (RDKVAVRILKSMGWKPGQGVGPRQTRKEKRQATARNSKEQYLMEHYG) form the G-patch domain. The span at 214–233 (DSNNEDEDDEDITFAPDDYE) shows a compositional bias: acidic residues. Over residues 323 to 333 (PKQKKQQHVQQ) the composition is skewed to basic residues. Composition is skewed to basic and acidic residues over residues 375-402 (PMDK…DLNP), 414-432 (QEEK…KDHS), and 679-691 (IQDK…EPSK). Residues 886-896 (ASSSNESSSSD) are compositionally biased toward low complexity. Basic residues-rich tracts occupy residues 906–934 (KLSK…KKSK) and 941–952 (HKAKKKKKKSKH).

This sequence belongs to the GPATCH1 family.

In Drosophila melanogaster (Fruit fly), this protein is G patch domain-containing protein 1 homolog.